Here is a 461-residue protein sequence, read N- to C-terminus: Vimentin (461 aa).

2 stretches are compositionally biased toward low complexity: residues 1–14 and 35–52; these read MNRT…SSSS and SSRQ…SYSV. Residues 1–52 are disordered; the sequence is MNRTTSRQTTSSSSYKRMFGGEGRPSVGMARSTLSSRQYSSPVRSSRMSYSV. Residues 1 to 91 are head; it reads MNRTTSRQTT…FALSDAINSE (91 aa). The interval 92 to 127 is coil 1A; sequence FKANRTNEKAEMQHLNDRFASYIDKVRFLEQQNKIL. Residues 92–127 are a coiled coil; sequence FKANRTNEKAEMQHLNDRFASYIDKVRFLEQQNKIL. An IF rod domain is found at 99 to 407; that stretch reads EKAEMQHLND…KLLEGEESRI (309 aa). The interval 128-149 is linker 1; sequence LAELEQLKGKGASRIGDLYEDE. Residues 150 to 241 adopt a coiled-coil conformation; the sequence is MRDLRRQVDQ…KLHDEEVAEL (92 aa). The segment at 150–241 is coil 1B; sequence MRDLRRQVDQ…KLHDEEVAEL (92 aa). The linker 12 stretch occupies residues 242-264; that stretch reads QAQIQDQHVQIDMDVAKPDLTAA. The tract at residues 265-403 is coil 2; sequence LRDVRVQYET…ATYRKLLEGE (139 aa). Positions 299 to 403 form a coiled coil; the sequence is NRNTDAIRQA…ATYRKLLEGE (105 aa). The segment at 404 to 461 is tail; it reads ESRITTPMPNFSSFNLRESMLEARPMIDNLSKKVVIKTIETRDGHVINESTQNHDDLE.

It belongs to the intermediate filament family. In terms of assembly, homomer assembled from elementary dimers. Post-translationally, one of the most prominent phosphoproteins in various cells of mesenchymal origin. Phosphorylation is enhanced during cell division, at which time vimentin filaments are significantly reorganized.

The protein localises to the cytoplasm. It is found in the cytoskeleton. Its subcellular location is the nucleus matrix. Vimentins are class-III intermediate filaments found in various non-epithelial cells, especially mesenchymal cells. Vimentin is attached to the nucleus, endoplasmic reticulum, and mitochondria, either laterally or terminally. In Oncorhynchus mykiss (Rainbow trout), this protein is Vimentin (vim).